We begin with the raw amino-acid sequence, 62 residues long: MIPVRCFTCGKVISPAWEEYKARREKGEDPKKILDDLGITRYCCRRMLLTHKEIIDELNPYQ.

Zn(2+)-binding residues include C6, C9, C43, and C44.

Belongs to the archaeal Rpo10/eukaryotic RPB10 RNA polymerase subunit family. Part of the RNA polymerase complex. Requires Zn(2+) as cofactor.

It is found in the cytoplasm. The enzyme catalyses RNA(n) + a ribonucleoside 5'-triphosphate = RNA(n+1) + diphosphate. Its function is as follows. DNA-dependent RNA polymerase (RNAP) catalyzes the transcription of DNA into RNA using the four ribonucleoside triphosphates as substrates. In Methanoregula boonei (strain DSM 21154 / JCM 14090 / 6A8), this protein is DNA-directed RNA polymerase subunit Rpo10.